The chain runs to 456 residues: tRNA modification GTPase MnmE (456 aa).

(6S)-5-formyl-5,6,7,8-tetrahydrofolate-binding residues include Arg-24, Glu-81, and Lys-120. The 164-residue stretch at 216–379 (GMTVVIAGRP…LRDHLKGCMG (164 aa)) folds into the TrmE-type G domain. Asn-226 contacts K(+). Residues 226-231 (NAGKSS), 245-251 (TDIAGTT), 270-273 (DTAG), and 335-338 (NKAD) each bind GTP. Ser-230 serves as a coordination point for Mg(2+). Thr-245, Ile-247, and Thr-250 together coordinate K(+). Thr-251 contacts Mg(2+). Lys-456 serves as a coordination point for (6S)-5-formyl-5,6,7,8-tetrahydrofolate.

The protein belongs to the TRAFAC class TrmE-Era-EngA-EngB-Septin-like GTPase superfamily. TrmE GTPase family. In terms of assembly, homodimer. Heterotetramer of two MnmE and two MnmG subunits. The cofactor is K(+).

Its subcellular location is the cytoplasm. In terms of biological role, exhibits a very high intrinsic GTPase hydrolysis rate. Involved in the addition of a carboxymethylaminomethyl (cmnm) group at the wobble position (U34) of certain tRNAs, forming tRNA-cmnm(5)s(2)U34. This chain is tRNA modification GTPase MnmE, found in Pseudomonas putida (strain ATCC 47054 / DSM 6125 / CFBP 8728 / NCIMB 11950 / KT2440).